The chain runs to 423 residues: Amino acid transporter AVT1J (423 aa).

11 consecutive transmembrane segments (helical) span residues 39-59 (CFHG…YALA), 63-83 (WLSL…AILI), 110-130 (VIVS…FLIL), 151-171 (FQGK…SVWL), 186-206 (FASG…GVGF), 219-239 (VATS…FPTL), 252-272 (VMII…VLGY), 297-317 (AIWT…TPII), 333-355 (ASGF…LLPF), 359-381 (LMSL…LCYL), and 390-410 (LGFE…VVIT).

Belongs to the amino acid/polyamine transporter 2 family. Amino acid/auxin permease (AAAP) (TC 2.A.18.5) subfamily.

The protein localises to the membrane. The protein is Amino acid transporter AVT1J of Arabidopsis thaliana (Mouse-ear cress).